The chain runs to 692 residues: UvrABC system protein B (692 aa).

One can recognise a Helicase ATP-binding domain in the interval 32–187; it reads ENIENGEKAQ…LLNDLVGIQF (156 aa). 45–52 contributes to the ATP binding site; sequence GATGTGKT. The Beta-hairpin signature appears at 98–121; sequence YYDYYQPEAYVPSSDTYIEKDSSV. Residues 436 to 631 form the Helicase C-terminal domain; that stretch reads QIDDLVGEIH…TIKKEIRDLI (196 aa). Residues 656-691 enclose the UVR domain; it reads KALVKKLEKEMQQAAAALDFEGAAQLRDMVLELRAM.

Belongs to the UvrB family. In terms of assembly, forms a heterotetramer with UvrA during the search for lesions. Interacts with UvrC in an incision complex.

It localises to the cytoplasm. Functionally, the UvrABC repair system catalyzes the recognition and processing of DNA lesions. A damage recognition complex composed of 2 UvrA and 2 UvrB subunits scans DNA for abnormalities. Upon binding of the UvrA(2)B(2) complex to a putative damaged site, the DNA wraps around one UvrB monomer. DNA wrap is dependent on ATP binding by UvrB and probably causes local melting of the DNA helix, facilitating insertion of UvrB beta-hairpin between the DNA strands. Then UvrB probes one DNA strand for the presence of a lesion. If a lesion is found the UvrA subunits dissociate and the UvrB-DNA preincision complex is formed. This complex is subsequently bound by UvrC and the second UvrB is released. If no lesion is found, the DNA wraps around the other UvrB subunit that will check the other stand for damage. This is UvrABC system protein B from Lactococcus lactis subsp. cremoris (strain MG1363).